The primary structure comprises 295 residues: Acetaldehyde dehydrogenase (295 aa).

Ser11–Ile14 contributes to the NAD(+) binding site. Residue Cys127 is the Acyl-thioester intermediate of the active site. NAD(+) contacts are provided by residues Ser158–Asn166 and Asn269.

The protein belongs to the acetaldehyde dehydrogenase family.

It carries out the reaction acetaldehyde + NAD(+) + CoA = acetyl-CoA + NADH + H(+). The sequence is that of Acetaldehyde dehydrogenase from Brevibacillus brevis (strain 47 / JCM 6285 / NBRC 100599).